The sequence spans 192 residues: Cytidylate kinase (192 aa).

Residue 7 to 15 (GPPGAGKST) coordinates ATP.

The protein belongs to the cytidylate kinase family. Type 2 subfamily.

Its subcellular location is the cytoplasm. The enzyme catalyses CMP + ATP = CDP + ADP. It catalyses the reaction dCMP + ATP = dCDP + ADP. The chain is Cytidylate kinase from Haloquadratum walsbyi (strain DSM 16790 / HBSQ001).